Consider the following 700-residue polypeptide: Kin of IRRE-like protein 2 (700 aa).

Residues M1 to S19 form the signal peptide. The Extracellular segment spans residues S20–R507. 5 consecutive Ig-like C2-type domains span residues P21 to H115, P120 to S219, P224 to E304, P309 to T391, and P395 to L497. Residues C42 and C100 are joined by a disulfide bond. N140 is a glycosylation site (N-linked (GlcNAc...) asparagine). 2 disulfides stabilise this stretch: C143-C201 and C245-C288. A Cell attachment site motif is present at residues R146–D148. N298 carries an N-linked (GlcNAc...) asparagine glycan. 2 cysteine pairs are disulfide-bonded: C330/C372 and C416/C482. The N-linked (GlcNAc...) asparagine glycan is linked to N481. The helical transmembrane segment at I508 to L528 threads the bilayer. The Cytoplasmic portion of the chain corresponds to C529 to V700. Positions L542–S576 are disordered. S563 is subject to Phosphoserine. The segment covering S564–S576 has biased composition (basic and acidic residues). Y595, Y596, and Y653 each carry phosphotyrosine. Residues F671–V700 form a disordered region. Polar residues predominate over residues S689–V700.

This sequence belongs to the immunoglobulin superfamily. As to quaternary structure, homodimer. Interacts with NPHS2/podocin (via the C-terminus). Interacts with NPHS1 (via the Ig-like domains). Interacts with FYN. N-glycosylated. Post-translationally, phosphorylated at Ser-548 or Ser-549; due to site ambiguity, the exact position of the serine phosphorylation could not be determined. Phosphorylation at residues Tyr-631 and/or Tyr-632. FYN mediates tyrosine phosphorylation in pancreatic beta-cells. In terms of processing, the extracellular domain is cleaved leading to the generation of a soluble fragment and a membrane-bound C-terminal fragment, which is further cleaved by gamma-secretase. In terms of tissue distribution, highly expressed in beta-cells of the pancreatic islets. Expression is seen in podocytes of kidney glomeruli, and in the cerebellum and hindbrain at 12.5 dpc, in the spinal cord at 10.5 dpc, and in retina and hypothalamus at 13.5 dpc.

The protein localises to the cell membrane. Functionally, may regulate basal insulin secretion. This Mus musculus (Mouse) protein is Kin of IRRE-like protein 2 (Kirrel2).